Reading from the N-terminus, the 294-residue chain is Protoheme IX farnesyltransferase (294 aa).

A run of 9 helical transmembrane segments spans residues 24–44 (VVLL…PGWV), 48–68 (LIAF…AINH), 96–116 (ALWF…LFVN), 118–138 (LTAL…TGYL), 145–165 (NIVI…TAVT), 172–192 (ALLL…ALAI), 224–244 (VLLL…WIYL), 245–265 (LGAL…YFTD), and 268–288 (VVAM…FVFL).

Belongs to the UbiA prenyltransferase family. Protoheme IX farnesyltransferase subfamily.

The protein localises to the cell inner membrane. It catalyses the reaction heme b + (2E,6E)-farnesyl diphosphate + H2O = Fe(II)-heme o + diphosphate. It participates in porphyrin-containing compound metabolism; heme O biosynthesis; heme O from protoheme: step 1/1. Converts heme B (protoheme IX) to heme O by substitution of the vinyl group on carbon 2 of heme B porphyrin ring with a hydroxyethyl farnesyl side group. The polypeptide is Protoheme IX farnesyltransferase (Legionella pneumophila (strain Corby)).